The following is a 508-amino-acid chain: Pyruvate kinase 2 (508 aa).

R50 serves as a coordination point for substrate. K(+)-binding residues include N52, S54, D85, and T86. Residue 52-55 participates in ATP binding; it reads NFSH. Residues R92 and K178 each contribute to the ATP site. Residue E243 participates in Mg(2+) binding. Substrate contacts are provided by G266, D267, and T299. A Mg(2+)-binding site is contributed by D267.

The protein belongs to the pyruvate kinase family. As to quaternary structure, homotetramer. It depends on Mg(2+) as a cofactor. K(+) serves as cofactor.

The enzyme catalyses pyruvate + ATP = phosphoenolpyruvate + ADP + H(+). It functions in the pathway carbohydrate degradation; glycolysis; pyruvate from D-glyceraldehyde 3-phosphate: step 5/5. The polypeptide is Pyruvate kinase 2 (PYK2) (Candida glabrata (strain ATCC 2001 / BCRC 20586 / JCM 3761 / NBRC 0622 / NRRL Y-65 / CBS 138) (Yeast)).